Consider the following 191-residue polypeptide: Glutathione-dependent formaldehyde-activating enzyme (191 aa).

Positions 22–169 (FAGGTLQCLC…LTELGLTPYD (148 aa)) constitute a CENP-V/GFA domain. Zn(2+) contacts are provided by Cys-29, Cys-31, Cys-50, Cys-52, Cys-55, Cys-97, and Cys-100.

This sequence belongs to the Gfa family. Zn(2+) serves as cofactor.

The catalysed reaction is S-(hydroxymethyl)glutathione = glutathione + formaldehyde. It participates in one-carbon metabolism; formaldehyde degradation; formate from formaldehyde (glutathione route): step 1/3. In terms of biological role, catalyzes the condensation of formaldehyde and glutathione to S-hydroxymethylglutathione. The protein is Glutathione-dependent formaldehyde-activating enzyme of Xanthomonas campestris pv. campestris (strain 8004).